Consider the following 261-residue polypeptide: Antiviral protein S (261 aa).

Disulfide bonds link cysteine 34–cysteine 258 and cysteine 84–cysteine 105. Glutamate 175 is an active-site residue.

This sequence belongs to the ribosome-inactivating protein family. Type 1 RIP subfamily.

It catalyses the reaction Endohydrolysis of the N-glycosidic bond at one specific adenosine on the 28S rRNA.. Inhibits viral infection of plants, and protein synthesis in vitro. The chain is Antiviral protein S from Phytolacca americana (American pokeweed).